The primary structure comprises 307 residues: Nicotinamide/nicotinic acid mononucleotide adenylyltransferase 2 (307 aa).

Residues Ser-16 and Phe-17 each coordinate NAD(+). His-24 lines the ATP pocket. The NAD(+) site is built by Trp-92 and Thr-95. S-palmitoyl cysteine attachment occurs at residues Cys-164 and Cys-165. Residues Gly-200, Asp-202, Leu-212, Trp-213, and Arg-232 each coordinate NAD(+). ATP is bound at residue 271-274; that stretch reads TKSR.

It belongs to the eukaryotic NMN adenylyltransferase family. Monomer. It depends on Mg(2+) as a cofactor. Post-translationally, degraded in response to injured neurite. Degradation is caused by polyubiquitination by MYCBP2 after recognition by FBXO45. Palmitoylated; palmitoylation is required for membrane association.

Its subcellular location is the golgi apparatus membrane. The protein resides in the cytoplasmic vesicle membrane. It is found in the cytoplasm. It localises to the cell projection. The protein localises to the axon. It carries out the reaction beta-nicotinamide D-ribonucleotide + ATP + H(+) = diphosphate + NAD(+). The catalysed reaction is nicotinate beta-D-ribonucleotide + ATP + H(+) = deamido-NAD(+) + diphosphate. It participates in cofactor biosynthesis; NAD(+) biosynthesis; NAD(+) from nicotinamide D-ribonucleotide: step 1/1. It functions in the pathway cofactor biosynthesis; NAD(+) biosynthesis; deamido-NAD(+) from nicotinate D-ribonucleotide: step 1/1. With respect to regulation, inhibited by P1-(adenosine-5')-P3-(nicotinamide-riboside-5')-triphosphate (Np3AD) and P1-(adenosine-5')-P4-(nicotinamide-riboside-5')-tetraphosphate (Np4AD). In terms of biological role, nicotinamide/nicotinate-nucleotide adenylyltransferase that acts as an axon maintenance factor. Axon survival factor required for the maintenance of healthy axons: acts by delaying Wallerian axon degeneration, an evolutionarily conserved process that drives the loss of damaged axons. Catalyzes the formation of NAD(+) from nicotinamide mononucleotide (NMN) and ATP. Can also use the deamidated form; nicotinic acid mononucleotide (NaMN) as substrate but with a lower efficiency. Cannot use triazofurin monophosphate (TrMP) as substrate. Also catalyzes the reverse reaction, i.e. the pyrophosphorolytic cleavage of NAD(+). For the pyrophosphorolytic activity prefers NAD(+), NADH and NaAD as substrates and degrades nicotinic acid adenine dinucleotide phosphate (NHD) less effectively. Fails to cleave phosphorylated dinucleotides NADP(+), NADPH and NaADP(+). Also acts as an activator of ADP-ribosylation by supporting the catalytic activity of PARP16 and promoting mono-ADP-ribosylation of ribosomes by PARP16. May be involved in the maintenance of axonal integrity. The sequence is that of Nicotinamide/nicotinic acid mononucleotide adenylyltransferase 2 (NMNAT2) from Bos taurus (Bovine).